Reading from the N-terminus, the 237-residue chain is Cysteine-rich venom protein DIS2 (237 aa).

An N-terminal signal peptide occupies residues 1-18; sequence MFVFILLSLAAVLQQSFG. The SCP domain occupies 37 to 165; that stretch reads VDKHNAFRRS…SYNYFYVCQY (129 aa). Intrachain disulfides connect C74–C152, C91–C166, C147–C163, C185–C192, C188–C197, C201–C234, and C219–C232. The 34-residue stretch at 201 to 234 folds into the ShKT domain; sequence CSREDVFMNCKSLVAQSNCQDDYIRKNCPATCFC.

The protein belongs to the CRISP family. Expressed by the venom gland.

Its subcellular location is the secreted. Functionally, weakly blocks contraction of smooth muscle elicited by high potassium-induced depolarization, but does not block caffeine-stimulated contraction. May target voltage-gated calcium channels on smooth muscle. In Dispholidus typus (Boomslang), this protein is Cysteine-rich venom protein DIS2.